The primary structure comprises 143 residues: MFLGTYEPRLDDKARLILPAKFRAELAEGLVLTRGQERCLYVFSAEEFARVHEQMRSAPLSSKQARDYIRVFLSGASDEVPDKQGRITIPASLRSYAGLDRELAVIGAGSRAEIWDAAAWQQYLQEKEAAFSETEEEVIPGLF.

2 consecutive SpoVT-AbrB domains span residues 5-47 (TYEP…SAEE) and 76-119 (ASDE…DAAA).

It belongs to the MraZ family. Forms oligomers.

The protein localises to the cytoplasm. Its subcellular location is the nucleoid. The chain is Transcriptional regulator MraZ from Kocuria rhizophila (strain ATCC 9341 / DSM 348 / NBRC 103217 / DC2201).